Here is a 38-residue protein sequence, read N- to C-terminus: Photosystem II reaction center protein L (38 aa).

A helical membrane pass occupies residues 17–37; the sequence is SLYWGLLLIFVLAVLFSNYFF.

Belongs to the PsbL family. In terms of assembly, PSII is composed of 1 copy each of membrane proteins PsbA, PsbB, PsbC, PsbD, PsbE, PsbF, PsbH, PsbI, PsbJ, PsbK, PsbL, PsbM, PsbT, PsbX, PsbY, PsbZ, Psb30/Ycf12, at least 3 peripheral proteins of the oxygen-evolving complex and a large number of cofactors. It forms dimeric complexes.

Its subcellular location is the plastid. It localises to the chloroplast thylakoid membrane. In terms of biological role, one of the components of the core complex of photosystem II (PSII). PSII is a light-driven water:plastoquinone oxidoreductase that uses light energy to abstract electrons from H(2)O, generating O(2) and a proton gradient subsequently used for ATP formation. It consists of a core antenna complex that captures photons, and an electron transfer chain that converts photonic excitation into a charge separation. This subunit is found at the monomer-monomer interface and is required for correct PSII assembly and/or dimerization. This Antirrhinum majus (Garden snapdragon) protein is Photosystem II reaction center protein L.